The chain runs to 182 residues: Biotin carboxyl carrier protein of acetyl-CoA carboxylase (182 aa).

Positions 70–95 (AAPSPSPEPGTSRAADHAVTSSGSQP) are disordered. In terms of domain architecture, Biotinyl-binding spans 104-180 (LAEVASPMVG…EYNQPLMRIK (77 aa)). N6-biotinyllysine is present on Lys-146.

As to quaternary structure, homodimer.

Its pathway is lipid metabolism; fatty acid biosynthesis. Functionally, this protein is a component of the acetyl coenzyme A carboxylase complex; first, biotin carboxylase catalyzes the carboxylation of the carrier protein and then the transcarboxylase transfers the carboxyl group to form malonyl-CoA. This chain is Biotin carboxyl carrier protein of acetyl-CoA carboxylase (accB), found in Nostoc sp. (strain PCC 7120 / SAG 25.82 / UTEX 2576).